Reading from the N-terminus, the 232-residue chain is Cytochrome c oxidase subunit 2 (232 aa).

Topologically, residues Met-1–Ser-30 are mitochondrial intermembrane. A helical transmembrane segment spans residues Leu-31–Tyr-52. Topologically, residues Phe-53–Val-69 are mitochondrial matrix. A helical transmembrane segment spans residues Phe-70–Tyr-89. Over Gly-90–Asp-232 the chain is Mitochondrial intermembrane. 6 residues coordinate Cu cation: His-164, Cys-199, Glu-201, Cys-203, His-207, and Met-210. Glu-201 lines the Mg(2+) pocket.

Belongs to the cytochrome c oxidase subunit 2 family. In terms of assembly, component of the cytochrome c oxidase (complex IV, CIV), a multisubunit enzyme composed of a catalytic core of 3 subunits and several supernumerary subunits. The complex exists as a monomer or a dimer and forms supercomplexes (SCs) in the inner mitochondrial membrane with ubiquinol-cytochrome c oxidoreductase (cytochrome b-c1 complex, complex III, CIII). The cofactor is Cu cation.

It localises to the mitochondrion inner membrane. The enzyme catalyses 4 Fe(II)-[cytochrome c] + O2 + 8 H(+)(in) = 4 Fe(III)-[cytochrome c] + 2 H2O + 4 H(+)(out). In terms of biological role, component of the cytochrome c oxidase, the last enzyme in the mitochondrial electron transport chain which drives oxidative phosphorylation. The respiratory chain contains 3 multisubunit complexes succinate dehydrogenase (complex II, CII), ubiquinol-cytochrome c oxidoreductase (cytochrome b-c1 complex, complex III, CIII) and cytochrome c oxidase (complex IV, CIV), that cooperate to transfer electrons derived from NADH and succinate to molecular oxygen, creating an electrochemical gradient over the inner membrane that drives transmembrane transport and the ATP synthase. Cytochrome c oxidase is the component of the respiratory chain that catalyzes the reduction of oxygen to water. Electrons originating from reduced cytochrome c in the intermembrane space (IMS) are transferred via the dinuclear copper A center (CU(A)) of subunit 2 and heme A of subunit 1 to the active site in subunit 1, a binuclear center (BNC) formed by heme A3 and copper B (CU(B)). The BNC reduces molecular oxygen to 2 water molecules using 4 electrons from cytochrome c in the IMS and 4 protons from the mitochondrial matrix. The polypeptide is Cytochrome c oxidase subunit 2 (COII) (Ascaris suum (Pig roundworm)).